The following is a 117-amino-acid chain: Large ribosomal subunit protein bL20 (117 aa).

Belongs to the bacterial ribosomal protein bL20 family.

Functionally, binds directly to 23S ribosomal RNA and is necessary for the in vitro assembly process of the 50S ribosomal subunit. It is not involved in the protein synthesizing functions of that subunit. The chain is Large ribosomal subunit protein bL20 (rplT) from Synechocystis sp. (strain ATCC 27184 / PCC 6803 / Kazusa).